Reading from the N-terminus, the 483-residue chain is Glutamyl-tRNA(Gln) amidotransferase subunit A (483 aa).

Residues Lys76 and Ser151 each act as charge relay system in the active site. Ser175 functions as the Acyl-ester intermediate in the catalytic mechanism.

The protein belongs to the amidase family. GatA subfamily. Heterotrimer of A, B and C subunits.

It catalyses the reaction L-glutamyl-tRNA(Gln) + L-glutamine + ATP + H2O = L-glutaminyl-tRNA(Gln) + L-glutamate + ADP + phosphate + H(+). Allows the formation of correctly charged Gln-tRNA(Gln) through the transamidation of misacylated Glu-tRNA(Gln) in organisms which lack glutaminyl-tRNA synthetase. The reaction takes place in the presence of glutamine and ATP through an activated gamma-phospho-Glu-tRNA(Gln). This chain is Glutamyl-tRNA(Gln) amidotransferase subunit A, found in Pseudomonas putida (strain W619).